The chain runs to 180 residues: Putative peroxiredoxin YkuU (180 aa).

The Thioredoxin domain occupies 4-165 (RMVGKQAPRF…TLRVLQALQT (162 aa)). Cysteine 52 serves as the catalytic Cysteine sulfenic acid (-SOH) intermediate.

This sequence belongs to the peroxiredoxin family. AhpC/Prx1 subfamily. Homodimer; disulfide-linked, upon oxidation.

It localises to the cytoplasm. The catalysed reaction is a hydroperoxide + [protein]-dithiol = [protein]-disulfide + an alcohol + H2O. Functionally, thiol-specific peroxidase that catalyzes the reduction of hydrogen peroxide and organic hydroperoxides to water and alcohols, respectively. Plays a role in cell protection against oxidative stress by detoxifying peroxides. The polypeptide is Putative peroxiredoxin YkuU (ykuU) (Bacillus subtilis (strain 168)).